The following is a 157-amino-acid chain: UPF0225 protein PSPTO_4127 (157 aa).

Belongs to the UPF0225 family.

The chain is UPF0225 protein PSPTO_4127 from Pseudomonas syringae pv. tomato (strain ATCC BAA-871 / DC3000).